A 388-amino-acid chain; its full sequence is Succinate--CoA ligase [ADP-forming] subunit beta (388 aa).

The ATP-grasp domain occupies 9–244 (KEIFRSMGVA…LEEEDPKEIE (236 aa)). Residues K46, 53 to 55 (GRG), E99, C102, and E107 each bind ATP. N199 and D213 together coordinate Mg(2+). Residues N264 and 321 to 323 (GIM) contribute to the substrate site.

The protein belongs to the succinate/malate CoA ligase beta subunit family. Heterotetramer of two alpha and two beta subunits. Mg(2+) is required as a cofactor.

It catalyses the reaction succinate + ATP + CoA = succinyl-CoA + ADP + phosphate. The catalysed reaction is GTP + succinate + CoA = succinyl-CoA + GDP + phosphate. Its pathway is carbohydrate metabolism; tricarboxylic acid cycle; succinate from succinyl-CoA (ligase route): step 1/1. Succinyl-CoA synthetase functions in the citric acid cycle (TCA), coupling the hydrolysis of succinyl-CoA to the synthesis of either ATP or GTP and thus represents the only step of substrate-level phosphorylation in the TCA. The beta subunit provides nucleotide specificity of the enzyme and binds the substrate succinate, while the binding sites for coenzyme A and phosphate are found in the alpha subunit. In Staphylococcus epidermidis (strain ATCC 35984 / DSM 28319 / BCRC 17069 / CCUG 31568 / BM 3577 / RP62A), this protein is Succinate--CoA ligase [ADP-forming] subunit beta.